Here is a 678-residue protein sequence, read N- to C-terminus: MASILLSLNTHTLLPLHTRTRTTKTTLKILRFSHKLPPSSPFYCNHETRLHLRCQTTTGTPSAADFAAAAGQDRLRKVPIKNIRNFCIIAHIDHGKSTLADKLLQMTGTVQKREMKEQFLDNMDLERERGITIKLQAARMRYVYENEGYCLNLIDTPGHVDFSYEVSRSLAACEGALLVVDASQGVEAQTLANVYLALENNLEIIPVLNKIDLPGAEPDRVCKEIEEVIGLDCSNAIHCSAKEGIGITEILNAIVERVPPPRDTAAMPLRALIFDSYYDPYRGVIVYFRVIDGNIKKGDRIYFMASEKDYYADEIGVLSPNQMQVEELYAGEVGYLSASIRSVADARVGDTITHYSRKAEQSLPGYEEATPMVFCGLFPVDADQFSELRDALEKLQLNDAALKFEPETSNAMGFGFRCGFLGLLHMEIVQERLEREYNLSLITTAPSVVYRVHCVDDDIVECSNPSLLPEPGKRRSVEEPFVKIELLTPKDYIGTLMELAQERRGEFKEMKYITENRASITYELPLAEMVGDFFDQLKSRSKGYASMEYTVVGYKESDLIRLDIQINGDPVEPLATIVHKDKAYSVGRALTQKLKELIPRQMFKVPIQACIGAKVIASESLSAIRKDVLAKCYGGDISRKKKLLKKQAAGKKRMKAIGKVDVPQEAFMAVLKLEKEVL.

The transit peptide at 1-43 (MASILLSLNTHTLLPLHTRTRTTKTTLKILRFSHKLPPSSPFY) directs the protein to the chloroplast. One can recognise a tr-type G domain in the interval 81–262 (KNIRNFCIIA…AIVERVPPPR (182 aa)). Residues 90–97 (AHIDHGKS), 155–159 (DTPGH), and 209–212 (NKID) each bind GTP.

This sequence belongs to the TRAFAC class translation factor GTPase superfamily. Classic translation factor GTPase family. LepA subfamily.

It localises to the plastid. The protein resides in the chloroplast. The catalysed reaction is GTP + H2O = GDP + phosphate + H(+). Promotes chloroplast protein synthesis. May act as a fidelity factor of the translation reaction, by catalyzing a one-codon backward translocation of tRNAs on improperly translocated ribosomes. The protein is Translation factor GUF1 homolog, chloroplastic of Populus trichocarpa (Western balsam poplar).